Consider the following 231-residue polypeptide: Large ribosomal subunit protein uL1 (231 aa).

The protein belongs to the universal ribosomal protein uL1 family. Part of the 50S ribosomal subunit.

Functionally, binds directly to 23S rRNA. The L1 stalk is quite mobile in the ribosome, and is involved in E site tRNA release. Protein L1 is also a translational repressor protein, it controls the translation of the L11 operon by binding to its mRNA. This chain is Large ribosomal subunit protein uL1, found in Beijerinckia indica subsp. indica (strain ATCC 9039 / DSM 1715 / NCIMB 8712).